A 256-amino-acid chain; its full sequence is ATP synthase peripheral stalk subunit b, mitochondrial (256 aa).

The transit peptide at 1-42 (MLSRVVLSAAATAASSLKNAAFLGPGVLQATRTFHTGQPHLA) directs the protein to the mitochondrion. Residue Lys131 is modified to N6-succinyllysine. N6-acetyllysine is present on residues Lys139, Lys154, Lys162, Lys221, Lys233, and Lys244.

The protein belongs to the eukaryotic ATPase B chain family. As to quaternary structure, component of the ATP synthase complex composed at least of ATP5F1A/subunit alpha, ATP5F1B/subunit beta, ATP5MC1/subunit c (homooctomer), MT-ATP6/subunit a, MT-ATP8/subunit 8, ATP5ME/subunit e, ATP5MF/subunit f, ATP5MG/subunit g, ATP5MK/subunit k, ATP5MJ/subunit j, ATP5F1C/subunit gamma, ATP5F1D/subunit delta, ATP5F1E/subunit epsilon, ATP5PF/subunit F6, ATP5PB/subunit b, ATP5PD/subunit d, ATP5PO/subunit OSCP. ATP synthase complex consists of a soluble F(1) head domain (subunits alpha(3) and beta(3)) - the catalytic core - and a membrane F(0) domain - the membrane proton channel (subunits c, a, 8, e, f, g, k and j). These two domains are linked by a central stalk (subunits gamma, delta, and epsilon) rotating inside the F1 region and a stationary peripheral stalk (subunits F6, b, d, and OSCP).

Its subcellular location is the mitochondrion. The protein localises to the mitochondrion inner membrane. Its function is as follows. Subunit b, of the mitochondrial membrane ATP synthase complex (F(1)F(0) ATP synthase or Complex V) that produces ATP from ADP in the presence of a proton gradient across the membrane which is generated by electron transport complexes of the respiratory chain. ATP synthase complex consist of a soluble F(1) head domain - the catalytic core - and a membrane F(1) domain - the membrane proton channel. These two domains are linked by a central stalk rotating inside the F(1) region and a stationary peripheral stalk. During catalysis, ATP synthesis in the catalytic domain of F(1) is coupled via a rotary mechanism of the central stalk subunits to proton translocation. In vivo, can only synthesize ATP although its ATP hydrolase activity can be activated artificially in vitro. Part of the complex F(0) domain. Part of the complex F(0) domain and the peripheric stalk, which acts as a stator to hold the catalytic alpha(3)beta(3) subcomplex and subunit a/ATP6 static relative to the rotary elements. The chain is ATP synthase peripheral stalk subunit b, mitochondrial from Pongo abelii (Sumatran orangutan).